Here is a 677-residue protein sequence, read N- to C-terminus: High-affinity choline transport protein (677 aa).

12 helical membrane passes run 15-35 (PVVFYTSAGLILLFSLTTILF), 54-74 (FGWYYLLAATLYIVFVVCIAC), 94-114 (LSWAAMLFAAGIGIDLMFFSV), 144-164 (FHYGLTGWSMYALMGMALGYF), 196-216 (IAAVIGTIFGIATTLGIGVVQ), 233-253 (AKAALIALSVIIATISVTSGV), 265-285 (VALALGLILFVLFMGDTSFLL), 319-339 (WTLFFWAWWVAWSPFVGLFLA), 350-370 (FVLGTLIIPFTFTLLWLSVFG), 412-432 (VATITGLLFYVTSADSGALVL), 452-472 (VFWSVAIGLLTLGMLMTNGIS), and 477-497 (TTVIMGLPFSFVIFFVMAGLY).

Belongs to the BCCT transporter (TC 2.A.15) family.

It is found in the cell inner membrane. The catalysed reaction is choline(in) + H(+)(in) = choline(out) + H(+)(out). Its pathway is amine and polyamine biosynthesis; betaine biosynthesis via choline pathway. High-affinity uptake of choline driven by a proton-motive force. The chain is High-affinity choline transport protein (betT) from Escherichia coli O157:H7.